Here is a 251-residue protein sequence, read N- to C-terminus: Transmembrane ascorbate-dependent reductase CYB561 (251 aa).

An N-acetylmethionine modification is found at Met1. Residues 1 to 16 (MEGGAAASTPAALPYY) are Cytoplasmic-facing. A helical transmembrane segment spans residues 17-37 (VAFSQLLGLTLVAMTGAWLGL). Positions 19-220 (FSQLLGLTLV…FGGAVLYILT (202 aa)) constitute a Cytochrome b561 domain. Residues 38-51 (YRGGIAWESDLQFN) lie on the Vesicular side of the membrane. Residues 52-72 (AHPLCMVIGLIFLQGDALLVY) form a helical membrane-spanning segment. Heme b contacts are provided by His53, Arg73, and Lys80. The Cytoplasmic segment spans residues 73 to 85 (RVFRNEAKRTTKV). Lys80 and Lys84 together coordinate L-ascorbate. Residues 86 to 106 (LHGLLHIFALVIALVGLVAVF) form a helical membrane-spanning segment. Heme b contacts are provided by residues His87, 116 to 119 (DLYS), and His121. Over 107-124 (DYHRKEGYADLYSLHSWC) the chain is Vesicular. The chain crosses the membrane as a helical span at residues 125 to 145 (GILVFVLYFVQWLVGFSFFLF). Topologically, residues 146–158 (PGASFSLRSRYRP) are cytoplasmic. An L-ascorbate-binding site is contributed by Arg153. A helical transmembrane segment spans residues 159 to 179 (QHIFFGATIFLLSVGTALLGL). The heme b site is built by His160 and Glu181. At 180 to 198 (KEALLFKLRDKYSAFEPEG) the chain is on the vesicular side. Residues 199–219 (VLANVLGLLLACFGGAVLYIL) form a helical membrane-spanning segment. The Cytoplasmic portion of the chain corresponds to 220 to 251 (TRADWKRPSQAEEQALSMDFKTLTEGDSPGSQ). Position 225 (Lys225) interacts with heme b. The residue at position 247 (Ser247) is a Phosphoserine.

Heme b is required as a cofactor.

The protein localises to the cytoplasmic vesicle. Its subcellular location is the secretory vesicle. It is found in the chromaffin granule membrane. It catalyses the reaction monodehydro-L-ascorbate radical(out) + L-ascorbate(in) = monodehydro-L-ascorbate radical(in) + L-ascorbate(out). Transmembrane reductase that uses ascorbate as an electron donor in the cytoplasm and transfers electrons across membranes to reduce monodehydro-L-ascorbate radical in the lumen of secretory vesicles. It is therefore involved the regeneration and homeostasis within secretory vesicles of ascorbate which in turn provides reducing equivalents needed to support the activity of intravesicular enzymes. The sequence is that of Transmembrane ascorbate-dependent reductase CYB561 (CYB561) from Pongo abelii (Sumatran orangutan).